We begin with the raw amino-acid sequence, 25 residues long: Glutamine synthetase 2 isozyme (25 aa).

This sequence belongs to the glutamine synthetase family. In terms of assembly, homohexamer.

Its subcellular location is the plastid. The protein localises to the chloroplast. The catalysed reaction is L-glutamate + NH4(+) + ATP = L-glutamine + ADP + phosphate + H(+). Functionally, plays a key role in the nitrogen metabolism of microorganisms, animals and plants. The chain is Glutamine synthetase 2 isozyme from Emiliania huxleyi (Coccolithophore).